Here is a 622-residue protein sequence, read N- to C-terminus: Elongation factor 4 (622 aa).

A tr-type G domain is found at 17 to 198 (ELLRNFCIIA…QIVRQIPAPV (182 aa)). Residues 29-34 (DHGKST) and 145-148 (NKID) contribute to the GTP site.

It belongs to the TRAFAC class translation factor GTPase superfamily. Classic translation factor GTPase family. LepA subfamily.

The protein localises to the cell membrane. The enzyme catalyses GTP + H2O = GDP + phosphate + H(+). In terms of biological role, required for accurate and efficient protein synthesis under certain stress conditions. May act as a fidelity factor of the translation reaction, by catalyzing a one-codon backward translocation of tRNAs on improperly translocated ribosomes. Back-translocation proceeds from a post-translocation (POST) complex to a pre-translocation (PRE) complex, thus giving elongation factor G a second chance to translocate the tRNAs correctly. Binds to ribosomes in a GTP-dependent manner. This Kineococcus radiotolerans (strain ATCC BAA-149 / DSM 14245 / SRS30216) protein is Elongation factor 4.